The sequence spans 258 residues: Imidazole glycerol phosphate synthase subunit HisF (258 aa).

Catalysis depends on residues Asp12 and Asp131.

It belongs to the HisA/HisF family. In terms of assembly, heterodimer of HisH and HisF.

It is found in the cytoplasm. The catalysed reaction is 5-[(5-phospho-1-deoxy-D-ribulos-1-ylimino)methylamino]-1-(5-phospho-beta-D-ribosyl)imidazole-4-carboxamide + L-glutamine = D-erythro-1-(imidazol-4-yl)glycerol 3-phosphate + 5-amino-1-(5-phospho-beta-D-ribosyl)imidazole-4-carboxamide + L-glutamate + H(+). Its pathway is amino-acid biosynthesis; L-histidine biosynthesis; L-histidine from 5-phospho-alpha-D-ribose 1-diphosphate: step 5/9. In terms of biological role, IGPS catalyzes the conversion of PRFAR and glutamine to IGP, AICAR and glutamate. The HisF subunit catalyzes the cyclization activity that produces IGP and AICAR from PRFAR using the ammonia provided by the HisH subunit. This is Imidazole glycerol phosphate synthase subunit HisF from Corynebacterium diphtheriae (strain ATCC 700971 / NCTC 13129 / Biotype gravis).